The sequence spans 177 residues: Acetyltransferase (177 aa).

In terms of domain architecture, N-acetyltransferase spans 4–174 (AQLRRVTAES…PTAIYFKTLG (171 aa)). Acetyl-CoA is bound by residues E27, 96 to 98 (LMV), 104 to 109 (GRGLGR), 130 to 131 (DT), and Y141.

Functionally, renders tabtoxin-producing pathogens tolerant to their own phytotoxins. This is Acetyltransferase (ttr) from Pseudomonas amygdali pv. tabaci (Pseudomonas syringae pv. tabaci).